The chain runs to 357 residues: 3-isopropylmalate dehydrogenase (357 aa).

Residue 76 to 89 (GPQWDTIDPALRPE) participates in NAD(+) binding. Residues Arg-96, Arg-106, Arg-134, and Asp-224 each contribute to the substrate site. Positions 224, 248, and 252 each coordinate Mg(2+). 282-294 (GSAPDIAGQGVAN) lines the NAD(+) pocket.

It belongs to the isocitrate and isopropylmalate dehydrogenases family. LeuB type 1 subfamily. As to quaternary structure, homodimer. Requires Mg(2+) as cofactor. Mn(2+) is required as a cofactor.

The protein resides in the cytoplasm. It carries out the reaction (2R,3S)-3-isopropylmalate + NAD(+) = 4-methyl-2-oxopentanoate + CO2 + NADH. It functions in the pathway amino-acid biosynthesis; L-leucine biosynthesis; L-leucine from 3-methyl-2-oxobutanoate: step 3/4. Functionally, catalyzes the oxidation of 3-carboxy-2-hydroxy-4-methylpentanoate (3-isopropylmalate) to 3-carboxy-4-methyl-2-oxopentanoate. The product decarboxylates to 4-methyl-2 oxopentanoate. The sequence is that of 3-isopropylmalate dehydrogenase from Xylella fastidiosa (strain 9a5c).